The sequence spans 274 residues: 3-methyl-2-oxobutanoate hydroxymethyltransferase (274 aa).

The Mg(2+) site is built by D49 and D88. 3-methyl-2-oxobutanoate contacts are provided by residues 49 to 50, D88, and K118; that span reads DS. Residue E120 participates in Mg(2+) binding. E187 serves as the catalytic Proton acceptor.

It belongs to the PanB family. As to quaternary structure, homodecamer; pentamer of dimers. The cofactor is Mg(2+).

Its subcellular location is the cytoplasm. The enzyme catalyses 3-methyl-2-oxobutanoate + (6R)-5,10-methylene-5,6,7,8-tetrahydrofolate + H2O = 2-dehydropantoate + (6S)-5,6,7,8-tetrahydrofolate. It participates in cofactor biosynthesis; (R)-pantothenate biosynthesis; (R)-pantoate from 3-methyl-2-oxobutanoate: step 1/2. Catalyzes the reversible reaction in which hydroxymethyl group from 5,10-methylenetetrahydrofolate is transferred onto alpha-ketoisovalerate to form ketopantoate. The polypeptide is 3-methyl-2-oxobutanoate hydroxymethyltransferase (Allorhizobium ampelinum (strain ATCC BAA-846 / DSM 112012 / S4) (Agrobacterium vitis (strain S4))).